Here is a 666-residue protein sequence, read N- to C-terminus: uncharacterized protein (666 aa).

Positions 263-553 (RFDLTTLKTY…THFQMKAYLR (291 aa)) constitute an RNB domain.

This sequence belongs to the RNR ribonuclease family.

This is an uncharacterized protein from Synechocystis sp. (strain ATCC 27184 / PCC 6803 / Kazusa).